The following is a 314-amino-acid chain: Probable RuBisCO transcriptional regulator (314 aa).

An HTH lysR-type domain is found at 6-63 (FTLDQLKIIKTIHREGSFKTAAKKLYISQPAVSRQVQNLERQLNTPIFYRDKRKARLT). Positions 23–42 (FKTAAKKLYISQPAVSRQVQ) form a DNA-binding region, H-T-H motif.

It belongs to the LysR transcriptional regulatory family.

The protein resides in the plastid. The protein localises to the chloroplast. Trans-acting transcriptional regulator of RuBisCO genes (rbcL and rbcS) expression. This is Probable RuBisCO transcriptional regulator (rbcR) from Emiliania huxleyi (Coccolithophore).